A 99-amino-acid polypeptide reads, in one-letter code: Aspartyl/glutamyl-tRNA(Asn/Gln) amidotransferase subunit C (99 aa).

This sequence belongs to the GatC family. In terms of assembly, heterotrimer of A, B and C subunits.

It carries out the reaction L-glutamyl-tRNA(Gln) + L-glutamine + ATP + H2O = L-glutaminyl-tRNA(Gln) + L-glutamate + ADP + phosphate + H(+). The catalysed reaction is L-aspartyl-tRNA(Asn) + L-glutamine + ATP + H2O = L-asparaginyl-tRNA(Asn) + L-glutamate + ADP + phosphate + 2 H(+). Its function is as follows. Allows the formation of correctly charged Asn-tRNA(Asn) or Gln-tRNA(Gln) through the transamidation of misacylated Asp-tRNA(Asn) or Glu-tRNA(Gln) in organisms which lack either or both of asparaginyl-tRNA or glutaminyl-tRNA synthetases. The reaction takes place in the presence of glutamine and ATP through an activated phospho-Asp-tRNA(Asn) or phospho-Glu-tRNA(Gln). The polypeptide is Aspartyl/glutamyl-tRNA(Asn/Gln) amidotransferase subunit C (Leptothrix cholodnii (strain ATCC 51168 / LMG 8142 / SP-6) (Leptothrix discophora (strain SP-6))).